A 96-amino-acid polypeptide reads, in one-letter code: Protein RnfH (96 aa).

The protein belongs to the UPF0125 (RnfH) family.

The sequence is that of Protein RnfH from Klebsiella pneumoniae (strain 342).